Here is a 163-residue protein sequence, read N- to C-terminus: Glutathione peroxidase-like peroxiredoxin HYR1 (163 aa).

Cys36 (cysteine sulfenic acid (-SOH) intermediate) is an active-site residue. Cys36 and Cys82 are oxidised to a cystine.

It belongs to the glutathione peroxidase family. Interacts with YAP1 and probably YBP1.

The protein localises to the cytoplasm. The protein resides in the mitochondrion intermembrane space. It is found in the peroxisome matrix. The catalysed reaction is a hydroperoxide + [thioredoxin]-dithiol = an alcohol + [thioredoxin]-disulfide + H2O. Involved in oxidative stress response and redox homeostasis. Functions as a sensor and transducer of hydroperoxide stress. In response to hydroperoxide stress it oxidizes (activates) the transcription activator YAP1, which is involved in transcription activation of genes of the oxidative stress response pathway. May also play a direct role in hydroperoxide scavenging, being the most active of three closely related S.cerevisiae peroxiredoxins (GPX1, GPX2, and HYR1/GPX3) with respect to peroxide and lipid hydroperoxide reduction. The three enzymes are not required for the glutaredoxin-mediated antioxidant function. In the presence of peroxides, HYR1/GPX3 is directly oxidized at Cys-36 to form a cysteine sulfenic acid (-SOH). Cys-36-SOH then forms either an intramolecular disulfide bond (Cys-36 with Cys-82) or a transient, intermolecular disulfide bond with 'Cys-598' of YAP1, which is further resolved into a YAP1 intramolecular disulfide bond ('Cys-303' with 'Cys-598'), which causes its nuclear accumulation and activation, and a reduced Cys-36 in HYR1/GPX3. The chain is Glutathione peroxidase-like peroxiredoxin HYR1 from Saccharomyces cerevisiae (strain ATCC 204508 / S288c) (Baker's yeast).